The chain runs to 105 residues: Large ribosomal subunit protein bL21 (105 aa).

This sequence belongs to the bacterial ribosomal protein bL21 family. Part of the 50S ribosomal subunit. Contacts protein L20.

This protein binds to 23S rRNA in the presence of protein L20. In Treponema pallidum (strain Nichols), this protein is Large ribosomal subunit protein bL21.